Here is a 495-residue protein sequence, read N- to C-terminus: Aspartyl/glutamyl-tRNA(Asn/Gln) amidotransferase subunit B (495 aa).

It belongs to the GatB/GatE family. GatB subfamily. Heterotrimer of A, B and C subunits.

The catalysed reaction is L-glutamyl-tRNA(Gln) + L-glutamine + ATP + H2O = L-glutaminyl-tRNA(Gln) + L-glutamate + ADP + phosphate + H(+). It carries out the reaction L-aspartyl-tRNA(Asn) + L-glutamine + ATP + H2O = L-asparaginyl-tRNA(Asn) + L-glutamate + ADP + phosphate + 2 H(+). Allows the formation of correctly charged Asn-tRNA(Asn) or Gln-tRNA(Gln) through the transamidation of misacylated Asp-tRNA(Asn) or Glu-tRNA(Gln) in organisms which lack either or both of asparaginyl-tRNA or glutaminyl-tRNA synthetases. The reaction takes place in the presence of glutamine and ATP through an activated phospho-Asp-tRNA(Asn) or phospho-Glu-tRNA(Gln). The protein is Aspartyl/glutamyl-tRNA(Asn/Gln) amidotransferase subunit B of Acinetobacter baylyi (strain ATCC 33305 / BD413 / ADP1).